The primary structure comprises 267 residues: MVKISFQPAVAGVKGDKADKASASAPAPASATEILLTPAREEQPPQHRSKRGGSVGGVCYLSMGMVVLLMGLVFASVYIYRYFFLAQLARDNFFRCGVLYEDSLSSQVRTQMELEEDVKIYLDENYERINVPVPQFGGGDPADIIHDFQRGLTAYHDISLDKCYVIELNTTIVLPPRNFWELLMNVKRGTYLPQTYIIQEEMVDTEHVSDKEALGSFIYHLCNGKDTYRLRRRATRRRINKRGAKNCNAIRHFENTFVVETLICGVV.

Threonine 37 carries the post-translational modification Phosphothreonine. Residues 55-75 (VGGVCYLSMGMVVLLMGLVFA) traverse the membrane as a helical; Signal-anchor for type II membrane protein segment. In terms of domain architecture, BRICHOS spans 136-230 (FGGGDPADII…LCNGKDTYRL (95 aa)). Cysteine 163 and cysteine 222 are joined by a disulfide. Asparagine 169 carries N-linked (GlcNAc...) asparagine glycosylation.

The protein belongs to the ITM2 family. As to quaternary structure, interacts with BACE1. Interacts with APP. Interacts with STMN2. In terms of processing, type I membrane-bound, as well as soluble, furin has a pre-eminent role in ITM2C proteolytic processing. PCSK7 and PCSK5 may also be involved although to a lesser extent. The soluble form of PCSK7 is incapable of processing ITM2C. Fails to undergo shedding by ADAM10 and intramembrane cleavage by SPPL2B.

It is found in the lysosome membrane. The protein localises to the cell membrane. Its function is as follows. Negative regulator of amyloid-beta peptide production. May inhibit the processing of APP by blocking its access to alpha- and beta-secretase. Binding to the beta-secretase-cleaved APP C-terminal fragment is negligible, suggesting that ITM2C is a poor gamma-secretase cleavage inhibitor. May play a role in TNF-induced cell death and neuronal differentiation. The sequence is that of Integral membrane protein 2C (ITM2C) from Macaca fascicularis (Crab-eating macaque).